The following is a 351-amino-acid chain: DNA polymerase IV (351 aa).

A UmuC domain is found at 4 to 185; the sequence is IIHVDMDCFF…LPLAKIPGVG (182 aa). Mg(2+) is bound by residues Asp-8 and Asp-103. The active site involves Glu-104.

It belongs to the DNA polymerase type-Y family. As to quaternary structure, monomer. Mg(2+) is required as a cofactor.

The protein resides in the cytoplasm. It carries out the reaction DNA(n) + a 2'-deoxyribonucleoside 5'-triphosphate = DNA(n+1) + diphosphate. Functionally, poorly processive, error-prone DNA polymerase involved in untargeted mutagenesis. Copies undamaged DNA at stalled replication forks, which arise in vivo from mismatched or misaligned primer ends. These misaligned primers can be extended by PolIV. Exhibits no 3'-5' exonuclease (proofreading) activity. May be involved in translesional synthesis, in conjunction with the beta clamp from PolIII. The sequence is that of DNA polymerase IV from Salmonella paratyphi B (strain ATCC BAA-1250 / SPB7).